A 660-amino-acid polypeptide reads, in one-letter code: Transcription activator of gluconeogenesis CHGG_09150 (660 aa).

Over residues methionine 1–aspartate 12 the composition is skewed to acidic residues. Residues methionine 1–arginine 52 are disordered. 2 stretches are compositionally biased toward basic and acidic residues: residues glutamine 13–aspartate 24 and alanine 36–arginine 49. The segment at residues cysteine 59 to cysteine 87 is a DNA-binding region (zn(2)-C6 fungal-type). Disordered stretches follow at residues leucine 98–serine 144, phenylalanine 170–glycine 191, and proline 319–asparagine 368. The span at serine 129–serine 144 shows a compositional bias: polar residues. Over residues glutamine 173–serine 184 the composition is skewed to low complexity. Composition is skewed to polar residues over residues threonine 320–proline 332 and threonine 344–asparagine 368. Residues serine 455–threonine 526 form the PAS domain. The disordered stretch occupies residues alanine 587–leucine 613.

This sequence belongs to the ERT1/acuK family.

The protein localises to the nucleus. Transcription factor which regulates nonfermentable carbon utilization. Activator of gluconeogenetic genes. The protein is Transcription activator of gluconeogenesis CHGG_09150 of Chaetomium globosum (strain ATCC 6205 / CBS 148.51 / DSM 1962 / NBRC 6347 / NRRL 1970) (Soil fungus).